The primary structure comprises 652 residues: Acetyl-coenzyme A synthetase (652 aa).

Residues 189–192 (RGGK) and threonine 311 each bind CoA. ATP contacts are provided by residues 387–389 (GEP), 411–416 (DTWWQT), aspartate 500, and arginine 515. Position 523 (serine 523) interacts with CoA. Arginine 526 provides a ligand contact to ATP. Valine 537, histidine 539, and valine 542 together coordinate Mg(2+). Arginine 584 is a CoA binding site. At lysine 609 the chain carries N6-acetyllysine.

It belongs to the ATP-dependent AMP-binding enzyme family. Mg(2+) is required as a cofactor. Acetylated. Deacetylation by the SIR2-homolog deacetylase activates the enzyme.

The enzyme catalyses acetate + ATP + CoA = acetyl-CoA + AMP + diphosphate. In terms of biological role, catalyzes the conversion of acetate into acetyl-CoA (AcCoA), an essential intermediate at the junction of anabolic and catabolic pathways. AcsA undergoes a two-step reaction. In the first half reaction, AcsA combines acetate with ATP to form acetyl-adenylate (AcAMP) intermediate. In the second half reaction, it can then transfer the acetyl group from AcAMP to the sulfhydryl group of CoA, forming the product AcCoA. The chain is Acetyl-coenzyme A synthetase from Bartonella henselae (strain ATCC 49882 / DSM 28221 / CCUG 30454 / Houston 1) (Rochalimaea henselae).